The following is a 105-amino-acid chain: Large ribosomal subunit protein bL21 (105 aa).

The protein belongs to the bacterial ribosomal protein bL21 family. As to quaternary structure, part of the 50S ribosomal subunit. Contacts protein L20.

Its function is as follows. This protein binds to 23S rRNA in the presence of protein L20. The sequence is that of Large ribosomal subunit protein bL21 from Rickettsia bellii (strain OSU 85-389).